Here is a 372-residue protein sequence, read N- to C-terminus: Glutamate 5-kinase (372 aa).

K14 is an ATP binding site. 3 residues coordinate substrate: S54, D141, and N153. ATP is bound at residue 173–174; sequence TD. In terms of domain architecture, PUA spans 280–358; the sequence is RGTLVLDAGA…DAIESLLGYS (79 aa).

The protein belongs to the glutamate 5-kinase family.

The protein localises to the cytoplasm. The enzyme catalyses L-glutamate + ATP = L-glutamyl 5-phosphate + ADP. Its pathway is amino-acid biosynthesis; L-proline biosynthesis; L-glutamate 5-semialdehyde from L-glutamate: step 1/2. Its function is as follows. Catalyzes the transfer of a phosphate group to glutamate to form L-glutamate 5-phosphate. The polypeptide is Glutamate 5-kinase (Pseudomonas putida (strain W619)).